The sequence spans 857 residues: Aminopeptidase N (857 aa).

Substrate contacts are provided by residues Glu-130 and 264–268 (GAMEN). His-298 provides a ligand contact to Zn(2+). Glu-299 serves as the catalytic Proton acceptor. Residues His-302 and Glu-321 each coordinate Zn(2+).

Belongs to the peptidase M1 family. As to quaternary structure, monomer. Requires Zn(2+) as cofactor. Post-translationally, the N-terminus is blocked.

It localises to the cytoplasm. The enzyme catalyses Release of an N-terminal amino acid, Xaa-|-Yaa- from a peptide, amide or arylamide. Xaa is preferably Ala, but may be most amino acids including Pro (slow action). When a terminal hydrophobic residue is followed by a prolyl residue, the two may be released as an intact Xaa-Pro dipeptide.. Its function is as follows. Aminopeptidase with broad substrate specificity to several peptides. Shows strong preference for leucine but also cleaves next to Arg and Lys in peptide-bond-containing substrates. The sequence is that of Aminopeptidase N (pepN) from Streptomyces lividans.